The sequence spans 347 residues: Dihydroorotase (347 aa).

Positions 14 and 16 each coordinate Zn(2+). Substrate is bound by residues 16-18 (HLR) and asparagine 42. Residues lysine 100, histidine 137, and histidine 175 each contribute to the Zn(2+) site. The residue at position 100 (lysine 100) is an N6-carboxylysine. Histidine 137 contributes to the substrate binding site. Leucine 220 is a binding site for substrate. Aspartate 248 serves as a coordination point for Zn(2+). Residue aspartate 248 is part of the active site. Histidine 252 and alanine 264 together coordinate substrate.

Belongs to the metallo-dependent hydrolases superfamily. DHOase family. Class II DHOase subfamily. Homodimer. It depends on Zn(2+) as a cofactor.

It catalyses the reaction (S)-dihydroorotate + H2O = N-carbamoyl-L-aspartate + H(+). The protein operates within pyrimidine metabolism; UMP biosynthesis via de novo pathway; (S)-dihydroorotate from bicarbonate: step 3/3. In terms of biological role, catalyzes the reversible cyclization of carbamoyl aspartate to dihydroorotate. The chain is Dihydroorotase from Jannaschia sp. (strain CCS1).